The primary structure comprises 149 residues: HTH-type transcriptional regulator NsrR (149 aa).

In terms of domain architecture, HTH rrf2-type spans 2-133 (QLTSYTDYSL…EQYTVKDLVL (132 aa)). Positions 28–51 (VKQVADIYRISYNHLTKVTHELGK) form a DNA-binding region, H-T-H motif. Residues cysteine 92, cysteine 100, and cysteine 106 each contribute to the [2Fe-2S] cluster site.

The cofactor is [2Fe-2S] cluster.

Its function is as follows. Nitric oxide-responsive transcriptional regulator. The sequence is that of HTH-type transcriptional regulator NsrR (nsrR) from Shouchella clausii (strain KSM-K16) (Alkalihalobacillus clausii).